Reading from the N-terminus, the 272-residue chain is Phosphatidylglycerol--prolipoprotein diacylglyceryl transferase (272 aa).

The next 7 helical transmembrane spans lie at 17 to 37, 55 to 75, 90 to 110, 125 to 145, 174 to 194, 202 to 222, and 230 to 250; these read LQVHWYGLMYLLAFLCAWGLA, LVFYGALGVVLGGRIGYVLFY, VWTGGMSFHGGFLGVMIAMLF, FVAPCVPTGLMFGRIGNFIGG, PSQIYQALCEGLLLFIILWWF, MAVSALFLMGYGVARFVMEFF, and GFILFGWMTKGQILTVPMLLI. Arg-138 is an a 1,2-diacyl-sn-glycero-3-phospho-(1'-sn-glycerol) binding site.

It belongs to the Lgt family.

The protein resides in the cell inner membrane. The catalysed reaction is L-cysteinyl-[prolipoprotein] + a 1,2-diacyl-sn-glycero-3-phospho-(1'-sn-glycerol) = an S-1,2-diacyl-sn-glyceryl-L-cysteinyl-[prolipoprotein] + sn-glycerol 1-phosphate + H(+). It participates in protein modification; lipoprotein biosynthesis (diacylglyceryl transfer). Functionally, catalyzes the transfer of the diacylglyceryl group from phosphatidylglycerol to the sulfhydryl group of the N-terminal cysteine of a prolipoprotein, the first step in the formation of mature lipoproteins. The chain is Phosphatidylglycerol--prolipoprotein diacylglyceryl transferase from Acinetobacter baumannii (strain AB307-0294).